The primary structure comprises 101 residues: Small ribosomal subunit protein bS18c (101 aa).

It belongs to the bacterial ribosomal protein bS18 family. As to quaternary structure, part of the 30S ribosomal subunit.

The protein localises to the plastid. It is found in the chloroplast. In Citrus sinensis (Sweet orange), this protein is Small ribosomal subunit protein bS18c.